The chain runs to 520 residues: Cytochrome P450 84A1 (520 aa).

Position 1 is an N-acetylmethionine (Met1). Residues 12–32 (LSDPTTSLVIVVSLFIFISFI) form a helical membrane-spanning segment. Residue Cys458 participates in heme binding.

The protein belongs to the cytochrome P450 family. The cofactor is heme.

It localises to the membrane. The protein operates within aromatic compound metabolism; phenylpropanoid biosynthesis. In Arabidopsis thaliana (Mouse-ear cress), this protein is Cytochrome P450 84A1 (CYP84A1).